The sequence spans 239 residues: Adenylate kinase 2 (239 aa).

29 to 34 is an ATP binding site; the sequence is GSGKGT. The interval 49 to 78 is NMP; sequence STGDILRAIIASGSELGQKVQKITESGGLV. Residues threonine 50, arginine 55, 76-78, 104-107, and glutamine 111 each bind AMP; these read GLV and GFPR. An LID region spans residues 145–182; the sequence is GRLFHLASGRSYHELFNPPKVPMVDDITGDRLVHRSDD. ATP-binding positions include arginine 146 and 155–156; that span reads SY. AMP-binding residues include arginine 179 and arginine 190.

The protein belongs to the adenylate kinase family. AK2 subfamily. As to quaternary structure, monomer. Mg(2+) is required as a cofactor.

The protein localises to the cytoplasm. Its subcellular location is the cytosol. It catalyses the reaction AMP + ATP = 2 ADP. Its pathway is purine metabolism; purine nucleotide biosynthesis. Functionally, catalyzes the reversible transfer of the terminal phosphate group between ATP and AMP. Plays an important role in cellular energy homeostasis and in adenine nucleotide metabolism. The protein is Adenylate kinase 2 of Schistosoma mansoni (Blood fluke).